A 686-amino-acid polypeptide reads, in one-letter code: UvrABC system protein C (686 aa).

A compositionally biased stretch (basic and acidic residues) spans Met-1–Val-14. The tract at residues Met-1 to Ala-48 is disordered. The GIY-YIG domain occupies Thr-81–Val-160. The UVR domain occupies His-270–Ile-305.

The protein belongs to the UvrC family. As to quaternary structure, interacts with UvrB in an incision complex.

Its subcellular location is the cytoplasm. In terms of biological role, the UvrABC repair system catalyzes the recognition and processing of DNA lesions. UvrC both incises the 5' and 3' sides of the lesion. The N-terminal half is responsible for the 3' incision and the C-terminal half is responsible for the 5' incision. In Bradyrhizobium diazoefficiens (strain JCM 10833 / BCRC 13528 / IAM 13628 / NBRC 14792 / USDA 110), this protein is UvrABC system protein C.